The following is a 130-amino-acid chain: Small ribosomal subunit protein uS9 (130 aa).

The protein belongs to the universal ribosomal protein uS9 family.

This is Small ribosomal subunit protein uS9 from Paraburkholderia phymatum (strain DSM 17167 / CIP 108236 / LMG 21445 / STM815) (Burkholderia phymatum).